Consider the following 378-residue polypeptide: Manganese peroxidase 1 (378 aa).

The signal sequence occupies residues 1–21 (MAFKSLIAFVALAAAVRAAPT). 5 cysteine pairs are disulfide-bonded: Cys24–Cys36, Cys35–Cys310, Cys54–Cys138, Cys274–Cys340, and Cys362–Cys369. 2 residues coordinate Mn(2+): Glu56 and Glu60. His67 functions as the Proton acceptor in the catalytic mechanism. The Ca(2+) site is built by Asp68, Gly83, Asp85, and Ser87. 2 N-linked (GlcNAc...) asparagine glycosylation sites follow: Asn97 and Asn152. His194 contributes to the heme b binding site. Ser195 serves as a coordination point for Ca(2+). Mn(2+) is bound at residue Asp200. Positions 212, 214, 217, and 219 each coordinate Ca(2+). Asn238 is a glycosylation site (N-linked (GlcNAc...) asparagine).

It belongs to the peroxidase family. Ligninase subfamily. The cofactor is Ca(2+). Requires heme b as cofactor.

The protein localises to the secreted. It catalyses the reaction 2 Mn(2+) + H2O2 + 2 H(+) = 2 Mn(3+) + 2 H2O. Catalyzes the oxidation of Mn(2+) to Mn(3+). The latter, acting as a diffusible redox mediator, is capable of oxidizing a variety of lignin compounds. The polypeptide is Manganese peroxidase 1 (MNP1) (Phanerodontia chrysosporium (White-rot fungus)).